The following is a 210-amino-acid chain: MEPACKYDFATSVLFTEAELHTRMRGVAQRIADDYSNCNLKPLENPLVIVSVLKGSFVFTADMVRILGDFGVPTRVEFLRASSYGHDTKSCGRVDVKADGLCDIRGKHVLVLEDILDTALTLREVVDSLKKSEPASIKTLVAIDKPGGRKIPFTAEYVVADVPNVFVVGYGLDYDQSYREVRDVVILKPSVYETWGKELERRKAAGEAKR.

GMP is bound by residues K54, 113–121, K145, and D173; that span reads EDILDTALT. D117 (proton acceptor) is an active-site residue. D173 contacts Mg(2+).

The protein belongs to the purine/pyrimidine phosphoribosyltransferase family. The cofactor is Mg(2+).

It localises to the cytoplasm. The enzyme catalyses IMP + diphosphate = hypoxanthine + 5-phospho-alpha-D-ribose 1-diphosphate. The catalysed reaction is GMP + diphosphate = guanine + 5-phospho-alpha-D-ribose 1-diphosphate. The protein operates within purine metabolism; IMP biosynthesis via salvage pathway; IMP from hypoxanthine: step 1/1. Converts guanine to guanosine monophosphate, and hypoxanthine to inosine monophosphate. Transfers the 5-phosphoribosyl group from 5-phosphoribosylpyrophosphate onto the purine. Plays a central role in the generation of purine nucleotides through the purine salvage pathway. The protein is Hypoxanthine-guanine phosphoribosyltransferase (HGPRT) of Trypanosoma brucei brucei.